Reading from the N-terminus, the 328-residue chain is Stress response kinase A (328 aa).

Asp-201 functions as the Proton acceptor in the catalytic mechanism. Mg(2+) is bound by residues Asn-206 and Asp-217. Asp-217 is an active-site residue.

The protein belongs to the SrkA/RdoA protein kinase family. As to quaternary structure, monomer. Mg(2+) is required as a cofactor.

The protein localises to the cytoplasm. The enzyme catalyses L-seryl-[protein] + ATP = O-phospho-L-seryl-[protein] + ADP + H(+). The catalysed reaction is L-threonyl-[protein] + ATP = O-phospho-L-threonyl-[protein] + ADP + H(+). Its function is as follows. A protein kinase that phosphorylates Ser and Thr residues. Probably acts to suppress the effects of stress linked to accumulation of reactive oxygen species. Probably involved in the extracytoplasmic stress response. The sequence is that of Stress response kinase A from Salmonella choleraesuis (strain SC-B67).